We begin with the raw amino-acid sequence, 397 residues long: Cercosporin biosynthesis regulatory protein CTB8 (397 aa).

The segment at residues 26 to 53 (CTHCSSQKIRCTKERPACARCVNKGLLC) is a DNA-binding region (zn(2)-C6 fungal-type). Disordered stretches follow at residues 63–90 (TRRH…APDS) and 173–198 (AEAS…ATTH). Over residues 74–87 (PETTISNAPTSSVA) the composition is skewed to polar residues. The segment covering 179–197 (PSSSSSPPSQRSDGGRATT) has biased composition (low complexity).

The protein resides in the nucleus. Functionally, transcription regulator of the gene cluster that mediates the biosynthesis of cercosporin, a light-activated, non-host-selective toxin. The perylenequinone chromophore of cercosporin absorbs light energy to attain an electronically-activated triplet state and produces active oxygen species such as the hydroxyl radical, superoxide, hydrogen peroxide or singlet oxygen upon reaction with oxygen molecules. These reactive oxygen species cause damage to various cellular components including lipids, proteins and nucleic acids. The chain is Cercosporin biosynthesis regulatory protein CTB8 from Cercospora beticola (Sugarbeet leaf spot fungus).